A 279-amino-acid polypeptide reads, in one-letter code: 2-dehydro-3-deoxyphosphooctonate aldolase (279 aa).

The protein belongs to the KdsA family.

It is found in the cytoplasm. It catalyses the reaction D-arabinose 5-phosphate + phosphoenolpyruvate + H2O = 3-deoxy-alpha-D-manno-2-octulosonate-8-phosphate + phosphate. The protein operates within carbohydrate biosynthesis; 3-deoxy-D-manno-octulosonate biosynthesis; 3-deoxy-D-manno-octulosonate from D-ribulose 5-phosphate: step 2/3. Its pathway is bacterial outer membrane biogenesis; lipopolysaccharide biosynthesis. In Aromatoleum aromaticum (strain DSM 19018 / LMG 30748 / EbN1) (Azoarcus sp. (strain EbN1)), this protein is 2-dehydro-3-deoxyphosphooctonate aldolase.